Here is a 210-residue protein sequence, read N- to C-terminus: Outer-membrane lipoprotein LolB (210 aa).

The signal sequence occupies residues 1–18; the sequence is MKKLTKLLSLTLLFALAG. Cys-19 is lipidated: N-palmitoyl cysteine. Cys-19 carries the S-diacylglycerol cysteine lipid modification.

It belongs to the LolB family. Monomer.

The protein localises to the cell outer membrane. Functionally, plays a critical role in the incorporation of lipoproteins in the outer membrane after they are released by the LolA protein. The polypeptide is Outer-membrane lipoprotein LolB (Glaesserella parasuis serovar 5 (strain SH0165) (Haemophilus parasuis)).